A 281-amino-acid polypeptide reads, in one-letter code: 18S rRNA (guanine-N(7))-methyltransferase (281 aa).

The segment at 256 to 281 (KARRRRQGKEVCPDTQYTGRKRKPRF) is disordered.

Belongs to the class I-like SAM-binding methyltransferase superfamily. BUD23/WBSCR22 family. Heterodimer with TRMT112; this heterodimerization is necessary for the metabolic stability and activity of the catalytic subunit BUD23. Interacts with GRIP1. In terms of processing, may be ubiquitinated and targeted to degradation in response to pro-inflammatory cytokine signaling.

The protein localises to the nucleus. It is found in the nucleoplasm. Its subcellular location is the cytoplasm. The protein resides in the perinuclear region. It catalyses the reaction a guanosine in 18S rRNA + S-adenosyl-L-methionine = an N(7)-methylguanosine in 18S rRNA + S-adenosyl-L-homocysteine. S-adenosyl-L-methionine-dependent methyltransferase that specifically methylates the N(7) position of a guanine in 18S rRNA. Requires the methyltransferase adapter protein TRM112 for full rRNA methyltransferase activity. Involved in the pre-rRNA processing steps leading to small-subunit rRNA production independently of its RNA-modifying catalytic activity. Important for biogenesis end export of the 40S ribosomal subunit independent on its methyltransferase activity. Locus-specific steroid receptor coactivator. Potentiates transactivation by glucocorticoid (NR3C1), mineralocorticoid (NR3C2), androgen (AR) and progesterone (PGR) receptors. Required for the maintenance of open chromatin at the TSC22D3/GILZ locus to facilitate NR3C1 loading on the response elements. Required for maintenance of dimethylation on histone H3 'Lys-79' (H3K79me2), although direct histone methyltransferase activity is not observed in vitro. The protein is 18S rRNA (guanine-N(7))-methyltransferase of Bos taurus (Bovine).